The primary structure comprises 215 residues: Large ribosomal subunit protein uL3 (215 aa).

Residues 136–161 (GVSISHRSHGSTGQRQDPGKVFKGKK) are disordered. An N5-methylglutamine modification is found at Q151.

It belongs to the universal ribosomal protein uL3 family. As to quaternary structure, part of the 50S ribosomal subunit. Forms a cluster with proteins L14 and L19. In terms of processing, methylated by PrmB.

Functionally, one of the primary rRNA binding proteins, it binds directly near the 3'-end of the 23S rRNA, where it nucleates assembly of the 50S subunit. The polypeptide is Large ribosomal subunit protein uL3 (Rickettsia akari (strain Hartford)).